Here is a 567-residue protein sequence, read N- to C-terminus: Proline--tRNA ligase (567 aa).

The protein belongs to the class-II aminoacyl-tRNA synthetase family. ProS type 1 subfamily. Homodimer.

Its subcellular location is the cytoplasm. It catalyses the reaction tRNA(Pro) + L-proline + ATP = L-prolyl-tRNA(Pro) + AMP + diphosphate. In terms of biological role, catalyzes the attachment of proline to tRNA(Pro) in a two-step reaction: proline is first activated by ATP to form Pro-AMP and then transferred to the acceptor end of tRNA(Pro). As ProRS can inadvertently accommodate and process non-cognate amino acids such as alanine and cysteine, to avoid such errors it has two additional distinct editing activities against alanine. One activity is designated as 'pretransfer' editing and involves the tRNA(Pro)-independent hydrolysis of activated Ala-AMP. The other activity is designated 'posttransfer' editing and involves deacylation of mischarged Ala-tRNA(Pro). The misacylated Cys-tRNA(Pro) is not edited by ProRS. The chain is Proline--tRNA ligase from Staphylococcus epidermidis (strain ATCC 35984 / DSM 28319 / BCRC 17069 / CCUG 31568 / BM 3577 / RP62A).